The sequence spans 535 residues: Dipeptide-binding protein (535 aa).

Residues 1-28 form the signal peptide; sequence MRISLKKSGMLKLGLSLVAMTVAASVQA. Cys34 and Cys262 are oxidised to a cystine. Residues 48 to 50, 383 to 385, and 433 to 436 contribute to the glycyl-L-leucine site; these read TSG, RPY, and WTGD. A disulfide bridge links Cys450 with Cys463.

The protein belongs to the bacterial solute-binding protein 5 family. As to quaternary structure, the complex is composed of two ATP-binding proteins (DppD and DppF), two transmembrane proteins (DppB and DppC) and a solute-binding protein (DppA).

The protein localises to the periplasm. With respect to regulation, heme binding is inhibited by dipeptide. Functionally, part of the ABC transporter DppABCDF involved in dipeptide transport. Binds dipeptides and accepts a wide range of side chains, including small neutral, bulky hydrophobic, and positively and negatively charged groups. Tripeptides are poor substrates. DppA alone controls the specificity of the Dpp transporter. In addition, plays a role in chemotaxis toward peptides via interaction with the chemotaxis protein Tap. Binds heme. When a foreign outer membrane heme receptor is expressed in E.coli, DppABCDF can also transport heme and its precursor, 5-aminolevulinic acid (ALA), from the periplasm into the cytoplasm. This Escherichia coli (strain K12) protein is Dipeptide-binding protein.